A 252-amino-acid polypeptide reads, in one-letter code: Ubiquinone biosynthesis O-methyltransferase (252 aa).

The S-adenosyl-L-methionine site is built by arginine 36, glycine 60, aspartate 81, and leucine 123.

This sequence belongs to the methyltransferase superfamily. UbiG/COQ3 family.

It catalyses the reaction a 3-demethylubiquinol + S-adenosyl-L-methionine = a ubiquinol + S-adenosyl-L-homocysteine + H(+). It carries out the reaction a 3-(all-trans-polyprenyl)benzene-1,2-diol + S-adenosyl-L-methionine = a 2-methoxy-6-(all-trans-polyprenyl)phenol + S-adenosyl-L-homocysteine + H(+). The protein operates within cofactor biosynthesis; ubiquinone biosynthesis. O-methyltransferase that catalyzes the 2 O-methylation steps in the ubiquinone biosynthetic pathway. This is Ubiquinone biosynthesis O-methyltransferase from Rickettsia prowazekii (strain Madrid E).